Reading from the N-terminus, the 432-residue chain is 3-phosphoshikimate 1-carboxyvinyltransferase (432 aa).

The 3-phosphoshikimate site is built by Lys-23, Ser-24, and Arg-28. Lys-23 serves as a coordination point for phosphoenolpyruvate. Gly-95 and Arg-123 together coordinate phosphoenolpyruvate. Residues Ser-167, Gln-169, Asp-317, and Lys-344 each coordinate 3-phosphoshikimate. A phosphoenolpyruvate-binding site is contributed by Gln-169. Residue Asp-317 is the Proton acceptor of the active site. The phosphoenolpyruvate site is built by Arg-348 and Arg-390.

The protein belongs to the EPSP synthase family. As to quaternary structure, monomer.

It is found in the cytoplasm. It carries out the reaction 3-phosphoshikimate + phosphoenolpyruvate = 5-O-(1-carboxyvinyl)-3-phosphoshikimate + phosphate. Its pathway is metabolic intermediate biosynthesis; chorismate biosynthesis; chorismate from D-erythrose 4-phosphate and phosphoenolpyruvate: step 6/7. Catalyzes the transfer of the enolpyruvyl moiety of phosphoenolpyruvate (PEP) to the 5-hydroxyl of shikimate-3-phosphate (S3P) to produce enolpyruvyl shikimate-3-phosphate and inorganic phosphate. The polypeptide is 3-phosphoshikimate 1-carboxyvinyltransferase (Staphylococcus aureus (strain MRSA252)).